The chain runs to 245 residues: Keratin-associated protein 10-12 (245 aa).

A run of 19 repeats spans residues 36 to 40 (CCEPP), 41 to 45 (CCAPA), 62 to 66 (CCRVT), 84 to 88 (CCQQS), 94 to 98 (CCTSS), 104 to 108 (CCVPV), 109 to 113 (CCKTV), 114 to 118 (CCKPV), 119 to 123 (CCMPV), 124 to 128 (CCGPS), 131 to 135 (CCQQS), 141 to 145 (CCISS), 151 to 155 (CCVPV), 156 to 160 (CCKPI), 161 to 165 (CCVPV), 173 to 177 (CCQQS), 183 to 187 (CCTTS), 188 to 192 (CCRPS), and 214 to 218 (CCVPT). The tract at residues 36 to 218 (CCEPPCCAPA…VPVPSCCVPT (183 aa)) is 19 X 5 AA repeats of C-C-X(3).

It belongs to the KRTAP type 10 family. As to quaternary structure, interacts with hair keratins. As to expression, restricted to a narrow region of the hair fiber cuticle, lying approximately 20 cell layers above the apex of the dermal papilla of the hair root; not detected in any other tissues.

Its function is as follows. In the hair cortex, hair keratin intermediate filaments are embedded in an interfilamentous matrix, consisting of hair keratin-associated proteins (KRTAP), which are essential for the formation of a rigid and resistant hair shaft through their extensive disulfide bond cross-linking with abundant cysteine residues of hair keratins. The matrix proteins include the high-sulfur and high-glycine-tyrosine keratins. The chain is Keratin-associated protein 10-12 (KRTAP10-12) from Homo sapiens (Human).